The primary structure comprises 381 residues: Cytosolic acyl coenzyme A thioester hydrolase (381 aa).

Residues 51–169 (PGHCIAMGRI…TLWYVPLSLK (119 aa)) enclose the HotDog ACOT-type 1 domain. The active site involves Asn67. Residues Lys169 and Lys199 each carry the N6-acetyllysine modification. Residues 225 to 339 (SYSQSSLIHL…FFTYVSLNQE (115 aa)) enclose the HotDog ACOT-type 2 domain. Residue Asp256 is part of the active site. Lys284 bears the N6-acetyllysine mark. The segment at 343 to 381 (LPVPQLVPETEDEKKRFEEGKGRYLQMKAKRQGHTEPQP) is disordered. Over residues 354–364 (DEKKRFEEGKG) the composition is skewed to basic and acidic residues.

As to quaternary structure, homohexamer. In terms of processing, the N-terminus is blocked. As to expression, isoform 1 is expressed constitutively in brain and testis. Isoform 2 is induced in liver by treatment with the peroxisome proliferator.

It is found in the cytoplasm. The protein resides in the cytosol. It carries out the reaction hexadecanoyl-CoA + H2O = hexadecanoate + CoA + H(+). It catalyses the reaction dodecanoyl-CoA + H2O = dodecanoate + CoA + H(+). The catalysed reaction is tetradecanoyl-CoA + H2O = tetradecanoate + CoA + H(+). The enzyme catalyses decanoyl-CoA + H2O = decanoate + CoA + H(+). It carries out the reaction octanoyl-CoA + H2O = octanoate + CoA + H(+). It catalyses the reaction octadecanoyl-CoA + H2O = octadecanoate + CoA + H(+). The catalysed reaction is (9Z)-octadecenoyl-CoA + H2O = (9Z)-octadecenoate + CoA + H(+). It functions in the pathway lipid metabolism; fatty acid metabolism. Functionally, catalyzes the hydrolysis of acyl-CoAs into free fatty acids and coenzyme A (CoASH), regulating their respective intracellular levels. Preferentially hydrolyzes palmitoyl-CoA, but has a broad specificity acting on other fatty acyl-CoAs with chain-lengths of C8-C18. May play an important physiological function in brain. This is Cytosolic acyl coenzyme A thioester hydrolase (Acot7) from Rattus norvegicus (Rat).